We begin with the raw amino-acid sequence, 91 residues long: Probable Fe(2+)-trafficking protein (91 aa).

This sequence belongs to the Fe(2+)-trafficking protein family.

Its function is as follows. Could be a mediator in iron transactions between iron acquisition and iron-requiring processes, such as synthesis and/or repair of Fe-S clusters in biosynthetic enzymes. In Xanthomonas axonopodis pv. citri (strain 306), this protein is Probable Fe(2+)-trafficking protein.